The sequence spans 206 residues: Endoplasmic reticulum transmembrane protein YET-like (206 aa).

At 1–2 (ME) the chain is on the lumenal side. Residues 3 to 23 (FLMTLVFLVLLVEIVFCTFFM) form a helical membrane-spanning segment. Over 24 to 46 (LPVSMHLRKNVYNKLDKLFGGQN) the chain is Cytoplasmic. The chain crosses the membrane as a helical span at residues 47 to 67 (AKIFLKVLALLVIIVFCDSIV). Residues 68–101 (NSYNINKKLHTPELTGAKFDRQNEYTRMFRYQRN) are Lumenal-facing. The chain crosses the membrane as a helical span at residues 102 to 122 (SYICGFCLYLFFLIYRSQGII). The Cytoplasmic segment spans residues 123 to 206 (SQLSNVEASK…KKPKTQKKDD (84 aa)). Residues 140–198 (KNNLNTVETLLSENEKLKTEIKDLKKMEKEHKAMKSQAENTTKEYLKLQEEYNQLLGKK) adopt a coiled-coil conformation. The short motif at 203–206 (KKDD) is the Di-lysine motif element.

It belongs to the BCAP29/BCAP31 family.

It localises to the endoplasmic reticulum membrane. In terms of biological role, may play a role in anterograde transport of membrane proteins from the endoplasmic reticulum to the Golgi. The sequence is that of Endoplasmic reticulum transmembrane protein YET-like from Dictyostelium discoideum (Social amoeba).